We begin with the raw amino-acid sequence, 531 residues long: 2-isopropylmalate synthase (531 aa).

One can recognise a Pyruvate carboxyltransferase domain in the interval 8 to 284 (IIIFDTTLRD…LTNIDTKQIY (277 aa)). Residues Asp17, His208, His210, and Asn244 each contribute to the Mn(2+) site. Residues 408 to 531 (RVELVQVSCG…TQDKQTEVTA (124 aa)) are regulatory domain.

Belongs to the alpha-IPM synthase/homocitrate synthase family. LeuA type 1 subfamily. Homodimer. Mn(2+) is required as a cofactor.

The protein resides in the cytoplasm. It carries out the reaction 3-methyl-2-oxobutanoate + acetyl-CoA + H2O = (2S)-2-isopropylmalate + CoA + H(+). It functions in the pathway amino-acid biosynthesis; L-leucine biosynthesis; L-leucine from 3-methyl-2-oxobutanoate: step 1/4. Its function is as follows. Catalyzes the condensation of the acetyl group of acetyl-CoA with 3-methyl-2-oxobutanoate (2-ketoisovalerate) to form 3-carboxy-3-hydroxy-4-methylpentanoate (2-isopropylmalate). The chain is 2-isopropylmalate synthase from Nostoc sp. (strain PCC 7120 / SAG 25.82 / UTEX 2576).